Consider the following 553-residue polypeptide: Coiled-coil domain-containing protein 85A (553 aa).

The segment covering 1-28 (MSKAAGGAAAAAAAAESCSPAPAGSSAA) has biased composition (low complexity). Residues 1-37 (MSKAAGGAAAAAAAAESCSPAPAGSSAAPPAPVEDLS) form a disordered region. Coiled-coil stretches lie at residues 43–109 (ELLQ…RDLC) and 137–169 (MHKEVALYLQKLKDLEVKQEEVVKENMELKELC). Disordered regions lie at residues 203 to 414 (YVRD…GMNE), 433 to 461 (ENRMLPQASQNRRQPPTRNSSNMEKGWGS), and 491 to 518 (SGADGSNSSPNSAASFSGHATPSQQPEP). Residues 209–220 (DGSSTSSTGSTD) show a composition bias toward low complexity. A compositionally biased stretch (basic and acidic residues) spans 236-260 (HLQKPRSEGSPEHSKHRSASPEHPQ). Residues 376-389 (GGSGGSGGSGGGSR) show a composition bias toward gly residues. Basic and acidic residues predominate over residues 391–403 (GTLRRQAQEDGSP). Residues 412–443 (MNESTLSYVRQLEARVRQLEEENRMLPQASQN) are a coiled coil. A compositionally biased stretch (polar residues) spans 439–455 (QASQNRRQPPTRNSSNM). Positions 491-508 (SGADGSNSSPNSAASFSG) are enriched in low complexity. Arg-541 carries the post-translational modification Asymmetric dimethylarginine.

This sequence belongs to the CCDC85 family. May interact with ARVCF; CTNND1; CTNND2 and PKP4.

It is found in the cell junction. The protein localises to the adherens junction. In terms of biological role, may play a role in cell-cell adhesion and epithelium development through its interaction with proteins of the beta-catenin family. The sequence is that of Coiled-coil domain-containing protein 85A (CCDC85A) from Homo sapiens (Human).